Reading from the N-terminus, the 304-residue chain is Mitochondrial glycine transporter (304 aa).

Solcar repeat units lie at residues His-25 to Tyr-114, Pro-121 to Ile-205, and Leu-215 to Lys-299. Helical transmembrane passes span Phe-31–Gln-56, Gly-89–Phe-115, Val-127–Glu-152, Gly-180–Lys-203, Thr-219–Met-245, and Gly-274–Val-292.

It belongs to the mitochondrial carrier (TC 2.A.29) family. SLC25A38 subfamily. As to expression, preferentially expressed in erythroid cells.

The protein localises to the mitochondrion inner membrane. It catalyses the reaction glycine(in) = glycine(out). Mitochondrial glycine transporter that imports glycine into the mitochondrial matrix. Plays an important role in providing glycine for the first enzymatic step in heme biosynthesis, the condensation of glycine with succinyl-CoA to produce 5-aminolevulinate (ALA) in the mitochondrial matrix. Required during erythropoiesis. In terms of biological role, plays a role as pro-apoptotic protein that induces caspase-dependent apoptosis. The sequence is that of Mitochondrial glycine transporter from Homo sapiens (Human).